Here is a 273-residue protein sequence, read N- to C-terminus: Kit ligand (273 aa).

The first 25 residues, 1 to 25, serve as a signal peptide directing secretion; that stretch reads MKKTQTWIITCIYLQLLLFNPLVKT. The residue at position 26 (Gln-26) is a Pyrrolidone carboxylic acid. Over 26–214 the chain is Extracellular; it reads QEICRNPVTD…AKSPEDPGLQ (189 aa). Cystine bridges form between Cys-29–Cys-114 and Cys-68–Cys-163. N-linked (GlcNAc...) asparagine; partial glycosylation occurs at Asn-90. An N-linked (GlcNAc...) asparagine glycan is attached at Asn-145. O-linked (GalNAc...) serine glycosylation is present at Ser-167. O-linked (GalNAc...) threonine glycosylation is found at Thr-168 and Thr-180. Positions 190–211 are disordered; sequence ASSLRNDSSSSNRKAAKSPEDP. Low complexity predominate over residues 191–202; the sequence is SSLRNDSSSSNR. N-linked (GlcNAc...) asparagine glycosylation is present at Asn-195. The chain crosses the membrane as a helical span at residues 215 to 237; sequence WTAMALPALISLVIGFAFGALYW. Residues 238–273 are Cytoplasmic-facing; it reads KKKQSSLTRAVENIQINEEDNEISMLQQKEREFQEV.

Belongs to the SCF family. Homodimer, non-covalently linked. Heterotetramer with KIT, binding two KIT molecules; thereby mediates KIT dimerization and subsequent activation by autophosphorylation. In terms of processing, a soluble form is produced by proteolytic processing of isoform 1 in the extracellular domain. The identity of N- and O-linked saccharides is not reported in PubMed:1708771. The O-linked polysaccharides are probably the mucin type linked to GalNAc.

Its subcellular location is the cell membrane. It is found in the cytoplasm. The protein resides in the cytoskeleton. The protein localises to the cell projection. It localises to the lamellipodium. Its subcellular location is the filopodium. It is found in the secreted. Functionally, ligand for the receptor-type protein-tyrosine kinase KIT. Plays an essential role in the regulation of cell survival and proliferation, hematopoiesis, stem cell maintenance, gametogenesis, mast cell development, migration and function, and in melanogenesis. KITLG/SCF binding can activate several signaling pathways. Promotes phosphorylation of PIK3R1, the regulatory subunit of phosphatidylinositol 3-kinase, and subsequent activation of the kinase AKT1. KITLG/SCF and KIT also transmit signals via GRB2 and activation of RAS, RAF1 and the MAP kinases MAPK1/ERK2 and/or MAPK3/ERK1. KITLG/SCF and KIT promote activation of STAT family members STAT1, STAT3 and STAT5. KITLG/SCF and KIT promote activation of PLCG1, leading to the production of the cellular signaling molecules diacylglycerol and inositol 1,4,5-trisphosphate. KITLG/SCF acts synergistically with other cytokines, probably interleukins. This chain is Kit ligand (Kitlg), found in Rattus norvegicus (Rat).